The sequence spans 89 residues: Small ribosomal subunit protein uS17 (89 aa).

Belongs to the universal ribosomal protein uS17 family. In terms of assembly, part of the 30S ribosomal subunit.

Functionally, one of the primary rRNA binding proteins, it binds specifically to the 5'-end of 16S ribosomal RNA. This Xylella fastidiosa (strain 9a5c) protein is Small ribosomal subunit protein uS17.